The primary structure comprises 335 residues: Ubiquinone biosynthesis protein COQ4, mitochondrial (335 aa).

The transit peptide at 1-10 (MLRLSLLRST) directs the protein to the mitochondrion. Zn(2+) is bound by residues His-210, Asp-211, His-214, and Glu-226.

The protein belongs to the COQ4 family. Component of a multi-subunit COQ enzyme complex, composed of at least COQ3, COQ4, COQ5, COQ6, COQ7 and COQ9. Interacts with COQ3. It depends on Zn(2+) as a cofactor.

The protein localises to the mitochondrion inner membrane. The enzyme catalyses 4-hydroxy-3-methoxy-5-(all-trans-hexaprenyl)benzoate + H(+) = 2-methoxy-6-(all-trans-hexaprenyl)phenol + CO2. It functions in the pathway cofactor biosynthesis; ubiquinone biosynthesis. In terms of biological role, lyase that catalyzes the C1-decarboxylation of 4-hydroxy-3-methoxy-5-(all-trans-hexaprenyl)benzoic acid into 2-methoxy-6-(all-trans-hexaprenyl)phenol during ubiquinone biosynthesis. In Saccharomyces cerevisiae (strain YJM789) (Baker's yeast), this protein is Ubiquinone biosynthesis protein COQ4, mitochondrial.